Here is a 576-residue protein sequence, read N- to C-terminus: MAEEEFSNTTHETFNFTLHTTLGVTTKLVLPTPAKPILPVQTGEQAQQEEQSSGMTIFFSLLVLAICIILVHLLIRYRLHFLPESVAVVSLGILMGAVIKVIEFKKLANWKEEEMFRPNMFFLLLLPPIIFESGYSLHKGNFFQNIGSITLFAVFGTAISAFVVGGGIYFLGQADVISKLNMTDSFAFGSLISAVDPVATIAIFNALHVDPVLNMLVFGESILNDAVSIVLTNTAEGLTRKHMSDVSGWQTFSQALGYFLKMFFGSAALGTLTGLISALVLKHIDLRKTPSLEFGMMIIFAYLPYGLAEGISLSGIMAILFSGIVMSHYTHHNLSPVTQILMQQTLRTVAFLCETCVFAFLGLSIFSFPHKFEISFVIWCIVLVLFGRAVNIFPLSYLLNFFRDHKITPKMMFIMWFSGLRGAIPYALSLHLGLEPMEKRQLIGTTTIVIVLFTILLLGGSTMPLIRLVDIEDARARRRSKKDVNLSKTEKMGNAIESEHLSELTEEEYEAHYIRQQDLKGFMWLDAKYLNPFFTRRLTQEDLHHGRIQMKSLTNKWYEEVRQGPSGSEDDEQELF.

11 helical membrane-spanning segments follow: residues 55-75, 79-99, 118-138, 151-171, 186-206, 256-276, 306-326, 349-369, 374-394, 412-432, and 446-466; these read MTIF…HLLI, LHFL…GAVI, PNMF…YSLH, LFAV…IYFL, FAFG…IFNA, LGYF…TGLI, GLAE…GIVM, VAFL…FSFP, ISFV…NIFP, MFIM…SLHL, and TTIV…MPLI. The residue at position 505 (Thr-505) is a Phosphothreonine. 2 positions are modified to phosphoserine: Ser-566 and Ser-568.

Belongs to the monovalent cation:proton antiporter 1 (CPA1) transporter (TC 2.A.36) family. In terms of tissue distribution, predominantly expressed in the liver, skeletal muscle, kidney, and testis. Expressed in both renal cortex and medulla. Detected throughout the entire gastrointestinal tract, with high expression detected in stomach, duodenum and ascending colon. In gastric epithelium; expressed in the glands within the fundus and pylorus regions.

It is found in the golgi apparatus membrane. The protein localises to the golgi apparatus. The protein resides in the trans-Golgi network membrane. It localises to the endosome. Its subcellular location is the multivesicular body membrane. It is found in the apical cell membrane. The protein localises to the cytoplasmic vesicle. The protein resides in the secretory vesicle. It localises to the acrosome. The catalysed reaction is Na(+)(in) + H(+)(out) = Na(+)(out) + H(+)(in). Its function is as follows. Na(+)/H(+) antiporter. Mediates the electoneutral exchange of intracellular H(+) ions for extracellular Na(+) in 1:1 stoichiometry. Acts as an Na(+)/H(+) exchanger in the trans-Golgi. Contributes to the regulation of pH regulation of Golgi apparatus, and consequently, in protein trafficking and endosomal morphology. Plays a crucial role in germ cells in acrosome biogenesis and sperm development, probably by playing a role in the fusion of the Golgi-derived vesicles that form the acrosomal cap. Can also be active at the cell surface of specialized cells. In the small intestine, plays a major physiological role in transepithelial absorption of Na(+). Regulates intracellular pH homeostasis of intestinal epithelial cells. Acts as an important regulator of mucosal integrity in the intestine and in the stomach, could mediate the pH fluctuation necessary for mucin exocytosis or assist membrane trafficking of other proteins. Plays a role in photoreceptor survival and in the maintenance of intracellular pH homeostasis in retinal pigment epithelium (RPE cells). The protein is Sodium/hydrogen exchanger 8 (Slc9a8) of Mus musculus (Mouse).